Reading from the N-terminus, the 80-residue chain is Acyl carrier protein (80 aa).

The region spanning 4-79 (ANVEQKVKNI…DAVNYITTHK (76 aa)) is the Carrier domain. S39 carries the O-(pantetheine 4'-phosphoryl)serine modification.

The protein belongs to the acyl carrier protein (ACP) family. Post-translationally, 4'-phosphopantetheine is transferred from CoA to a specific serine of apo-ACP by AcpS. This modification is essential for activity because fatty acids are bound in thioester linkage to the sulfhydryl of the prosthetic group.

Its subcellular location is the cytoplasm. It functions in the pathway lipid metabolism; fatty acid biosynthesis. Its function is as follows. Carrier of the growing fatty acid chain in fatty acid biosynthesis. The protein is Acyl carrier protein of Anaeromyxobacter sp. (strain Fw109-5).